The primary structure comprises 335 residues: Biotin synthase (335 aa).

Residues 47 to 276 (FYGKKVKLNM…SKEIRISGGR (230 aa)) form the Radical SAM core domain. Residues Cys-65, Cys-69, and Cys-72 each contribute to the [4Fe-4S] cluster site. [2Fe-2S] cluster contacts are provided by Cys-109, Cys-141, Cys-201, and Arg-271.

This sequence belongs to the radical SAM superfamily. Biotin synthase family. Homodimer. [4Fe-4S] cluster is required as a cofactor. [2Fe-2S] cluster serves as cofactor.

It carries out the reaction (4R,5S)-dethiobiotin + (sulfur carrier)-SH + 2 reduced [2Fe-2S]-[ferredoxin] + 2 S-adenosyl-L-methionine = (sulfur carrier)-H + biotin + 2 5'-deoxyadenosine + 2 L-methionine + 2 oxidized [2Fe-2S]-[ferredoxin]. Its pathway is cofactor biosynthesis; biotin biosynthesis; biotin from 7,8-diaminononanoate: step 2/2. Catalyzes the conversion of dethiobiotin (DTB) to biotin by the insertion of a sulfur atom into dethiobiotin via a radical-based mechanism. The chain is Biotin synthase from Bacillus subtilis (strain 168).